A 341-amino-acid chain; its full sequence is uncharacterized protein (341 aa).

A helical transmembrane segment spans residues 315–337 (VAAWFSGIAGGTFLALKLVSLMM).

The protein localises to the cell membrane. This is an uncharacterized protein from Bacillus subtilis (strain 168).